Reading from the N-terminus, the 1039-residue chain is 3',5'-cyclic-AMP phosphodiesterase 4 (1039 aa).

The signal sequence occupies residues 1–29; that stretch reads MFNNNNNDKINNTMMSNNPSGQIINLESI. N-linked (GlcNAc...) asparagine glycosylation is found at asparagine 11, asparagine 34, and asparagine 37. The Extracellular segment spans residues 30–201; the sequence is DCNSNLSNTT…KKKVNAESLR (172 aa). 2 disordered regions span residues 40-63 and 116-181; these read SIKD…NNIN and IIPN…NNSI. Positions 45–63 are enriched in low complexity; the sequence is NNNNNNNNNNNNNINNNIN. N-linked (GlcNAc...) asparagine glycans are attached at residues asparagine 119, asparagine 124, asparagine 131, asparagine 167, and asparagine 178. The chain crosses the membrane as a helical span at residues 202 to 222; it reads GPIIFQNFILYTFFLIVIGTA. Residues 223-226 are Cytoplasmic-facing; the sequence is EGTS. The helical transmembrane segment at 227–247 threads the bilayer; the sequence is WAPEIRVANFVPYCVMCVVLL. The Extracellular segment spans residues 248–256; sequence EFNRLHKKP. Residues 257–277 form a helical membrane-spanning segment; that stretch reads LLRIIFPLYTSNIPFAYMCIF. Residues 278–283 are Cytoplasmic-facing; the sequence is SREARK. The helical transmembrane segment at 284–304 threads the bilayer; the sequence is YVLISLLFFASCLCIFLQSGI. The Extracellular segment spans residues 305 to 310; that stretch reads PDLRKH. The chain crosses the membrane as a helical span at residues 311 to 331; that stretch reads IVIFCIIFMINYGCCILFMDW. Residues 332–356 are Cytoplasmic-facing; the sequence is FYIDTTGTKPYRGRILATKIHWGEE. A helical transmembrane segment spans residues 357–377; it reads ATILVSMALLGCIFIVLEKFI. Residues 378–1039 are Extracellular-facing; that stretch reads KSYARCVAEQ…LTQSNYLIVV (662 aa). Residues 384-414 adopt a coiled-coil conformation; that stretch reads VAEQHYQIQCLQKEKEKLQTEINISLKKLDL. Residues asparagine 406, asparagine 430, asparagine 500, and asparagine 515 are each glycosylated (N-linked (GlcNAc...) asparagine). The PDEase domain maps to 533–973; the sequence is PEITDQGIQE…QQLQQQQQQQ (441 aa). Histidine 609 (proton donor) is an active-site residue. The a divalent metal cation site is built by histidine 613, histidine 648, and aspartate 649. Positions 738-835 are disordered; the sequence is FPTTTNTQQP…NNSNSNNQNQ (98 aa). Residues 740–835 are compositionally biased toward low complexity; that stretch reads TTTNTQQPSS…NNSNSNNQNQ (96 aa). Residues asparagine 769, asparagine 791, asparagine 795, asparagine 804, asparagine 809, asparagine 823, and asparagine 826 are each glycosylated (N-linked (GlcNAc...) asparagine). An a divalent metal cation-binding site is contributed by aspartate 861. 4 N-linked (GlcNAc...) asparagine glycosylation sites follow: asparagine 874, asparagine 944, asparagine 1018, and asparagine 1023. Low complexity predominate over residues 978–1019; the sequence is QQQQQQLHHHQQQQQFQHQQHQQQLQHQHQQQLNNQNQNQNQ. The segment at 978 to 1033 is disordered; it reads QQQQQQLHHHQQQQQFQHQQHQQQLQHQHQQQLNNQNQNQNQSNSNNSNSFGLTQS. The segment covering 1020–1033 has biased composition (polar residues); it reads SNSNNSNSFGLTQS.

The protein belongs to the cyclic nucleotide phosphodiesterase family. The cofactor is a divalent metal cation.

It localises to the cell membrane. It catalyses the reaction 3',5'-cyclic AMP + H2O = AMP + H(+). Inhibited by 3-isobutyl-1-methylxanthine (IBMX). In terms of biological role, phosphodiesterase specific for extracellular cAMP. Involved in the degradation of extracellular cAMP specifically during multicellular development. This chain is 3',5'-cyclic-AMP phosphodiesterase 4 (Pde4), found in Dictyostelium discoideum (Social amoeba).